Here is a 444-residue protein sequence, read N- to C-terminus: Exodeoxyribonuclease 7 large subunit (444 aa).

The protein belongs to the XseA family. Heterooligomer composed of large and small subunits.

The protein resides in the cytoplasm. The enzyme catalyses Exonucleolytic cleavage in either 5'- to 3'- or 3'- to 5'-direction to yield nucleoside 5'-phosphates.. Its function is as follows. Bidirectionally degrades single-stranded DNA into large acid-insoluble oligonucleotides, which are then degraded further into small acid-soluble oligonucleotides. In Pseudoalteromonas atlantica (strain T6c / ATCC BAA-1087), this protein is Exodeoxyribonuclease 7 large subunit.